Reading from the N-terminus, the 155-residue chain is Small ribosomal subunit protein uS8m (155 aa).

It belongs to the universal ribosomal protein uS8 family. In terms of assembly, component of the mitochondrial small ribosomal subunit (mt-SSU). Mature yeast 74S mitochondrial ribosomes consist of a small (37S) and a large (54S) subunit. The 37S small subunit contains a 15S ribosomal RNA (15S mt-rRNA) and 34 different proteins. The 54S large subunit contains a 21S rRNA (21S mt-rRNA) and 46 different proteins.

It localises to the mitochondrion. Functionally, component of the mitochondrial ribosome (mitoribosome), a dedicated translation machinery responsible for the synthesis of mitochondrial genome-encoded proteins, including at least some of the essential transmembrane subunits of the mitochondrial respiratory chain. The mitoribosomes are attached to the mitochondrial inner membrane and translation products are cotranslationally integrated into the membrane. This chain is Small ribosomal subunit protein uS8m (MRPS8), found in Saccharomyces cerevisiae (strain ATCC 204508 / S288c) (Baker's yeast).